Reading from the N-terminus, the 86-residue chain is Parvalbumin beta 3 (86 aa).

An N-acetylalanine modification is found at Ala1. An EF-hand domain is found at 35 to 70; it reads LSPEEVKKFFAIIDQDHSGFIEEEELKLFLQTFSAG. Asp48, Asp50, Ser52, Phe54, Glu56, and Glu59 together coordinate Ca(2+).

Belongs to the parvalbumin family.

In terms of biological role, in muscle, parvalbumin is thought to be involved in relaxation after contraction. It binds two calcium ions. This Merluccius hubbsi (Argentine hake) protein is Parvalbumin beta 3.